Consider the following 109-residue polypeptide: Parvalbumin beta 2 (109 aa).

Residue alanine 2 is modified to N-acetylalanine. EF-hand domains lie at lysine 39–glycine 74 and leucine 78–alanine 109. The Ca(2+) site is built by aspartate 52, aspartate 54, serine 56, phenylalanine 58, glutamate 60, glutamate 63, aspartate 91, aspartate 93, aspartate 95, lysine 97, and glutamate 102.

This sequence belongs to the parvalbumin family. In terms of assembly, monomer.

In terms of biological role, in muscle, parvalbumin is thought to be involved in relaxation after contraction. It binds two calcium ions. This Gadus morhua (Atlantic cod) protein is Parvalbumin beta 2.